The sequence spans 138 residues: Putative pre-16S rRNA nuclease (138 aa).

It belongs to the YqgF nuclease family.

It localises to the cytoplasm. Its function is as follows. Could be a nuclease involved in processing of the 5'-end of pre-16S rRNA. The protein is Putative pre-16S rRNA nuclease of Fusobacterium nucleatum subsp. nucleatum (strain ATCC 25586 / DSM 15643 / BCRC 10681 / CIP 101130 / JCM 8532 / KCTC 2640 / LMG 13131 / VPI 4355).